A 396-amino-acid polypeptide reads, in one-letter code: Elongation factor Tu (396 aa).

The region spanning 10–206 (KAHVNIGTIG…AVDEYIPDPV (197 aa)) is the tr-type G domain. The G1 stretch occupies residues 19–26 (GHVDHGKT). Position 19 to 26 (19 to 26 (GHVDHGKT)) interacts with GTP. T26 provides a ligand contact to Mg(2+). Positions 62-66 (GITIN) are G2. Positions 83–86 (DAPG) are G3. Residues 83-87 (DAPGH) and 138-141 (NKSD) each bind GTP. Residues 138 to 141 (NKSD) form a G4 region. Positions 176-178 (SAL) are G5.

The protein belongs to the TRAFAC class translation factor GTPase superfamily. Classic translation factor GTPase family. EF-Tu/EF-1A subfamily. Monomer.

The protein resides in the cytoplasm. The enzyme catalyses GTP + H2O = GDP + phosphate + H(+). GTP hydrolase that promotes the GTP-dependent binding of aminoacyl-tRNA to the A-site of ribosomes during protein biosynthesis. This is Elongation factor Tu from Micrococcus luteus (Micrococcus lysodeikticus).